We begin with the raw amino-acid sequence, 911 residues long: Beta-galactosidase 12 (911 aa).

A signal peptide spans 1–25 (MAARVAAAVAAALLAAALLLPGAAA). Glutamate 192 serves as the catalytic Proton donor. Glutamate 262 serves as the catalytic Nucleophile. N-linked (GlcNAc...) asparagine glycosylation is found at asparagine 263, asparagine 389, asparagine 473, and asparagine 777. The SUEL-type lectin domain maps to 744–831 (EDTSTRGTLN…ATLAVQLLLA (88 aa)).

Belongs to the glycosyl hydrolase 35 family.

It is found in the secreted. The protein localises to the extracellular space. The protein resides in the apoplast. It carries out the reaction Hydrolysis of terminal non-reducing beta-D-galactose residues in beta-D-galactosides.. In Oryza sativa subsp. japonica (Rice), this protein is Beta-galactosidase 12.